We begin with the raw amino-acid sequence, 309 residues long: Sulfate adenylyltransferase subunit 2 (309 aa).

It belongs to the PAPS reductase family. CysD subfamily. In terms of assembly, heterodimer composed of CysD, the smaller subunit, and CysN.

It catalyses the reaction sulfate + ATP + H(+) = adenosine 5'-phosphosulfate + diphosphate. The protein operates within sulfur metabolism; hydrogen sulfide biosynthesis; sulfite from sulfate: step 1/3. In terms of biological role, with CysN forms the ATP sulfurylase (ATPS) that catalyzes the adenylation of sulfate producing adenosine 5'-phosphosulfate (APS) and diphosphate, the first enzymatic step in sulfur assimilation pathway. APS synthesis involves the formation of a high-energy phosphoric-sulfuric acid anhydride bond driven by GTP hydrolysis by CysN coupled to ATP hydrolysis by CysD. This chain is Sulfate adenylyltransferase subunit 2, found in Mycobacterium sp. (strain KMS).